A 207-amino-acid polypeptide reads, in one-letter code: Thiamine-phosphate synthase (207 aa).

4-amino-2-methyl-5-(diphosphooxymethyl)pyrimidine is bound by residues 36–40 (QLRMK) and N68. Residues D69 and D88 each coordinate Mg(2+). Residue S106 coordinates 4-amino-2-methyl-5-(diphosphooxymethyl)pyrimidine. 132–134 (TNT) lines the 2-[(2R,5Z)-2-carboxy-4-methylthiazol-5(2H)-ylidene]ethyl phosphate pocket. K135 provides a ligand contact to 4-amino-2-methyl-5-(diphosphooxymethyl)pyrimidine. Residues G162 and 182–183 (VS) each bind 2-[(2R,5Z)-2-carboxy-4-methylthiazol-5(2H)-ylidene]ethyl phosphate.

The protein belongs to the thiamine-phosphate synthase family. The cofactor is Mg(2+).

The enzyme catalyses 2-[(2R,5Z)-2-carboxy-4-methylthiazol-5(2H)-ylidene]ethyl phosphate + 4-amino-2-methyl-5-(diphosphooxymethyl)pyrimidine + 2 H(+) = thiamine phosphate + CO2 + diphosphate. The catalysed reaction is 2-(2-carboxy-4-methylthiazol-5-yl)ethyl phosphate + 4-amino-2-methyl-5-(diphosphooxymethyl)pyrimidine + 2 H(+) = thiamine phosphate + CO2 + diphosphate. It carries out the reaction 4-methyl-5-(2-phosphooxyethyl)-thiazole + 4-amino-2-methyl-5-(diphosphooxymethyl)pyrimidine + H(+) = thiamine phosphate + diphosphate. The protein operates within cofactor biosynthesis; thiamine diphosphate biosynthesis; thiamine phosphate from 4-amino-2-methyl-5-diphosphomethylpyrimidine and 4-methyl-5-(2-phosphoethyl)-thiazole: step 1/1. Functionally, condenses 4-methyl-5-(beta-hydroxyethyl)thiazole monophosphate (THZ-P) and 2-methyl-4-amino-5-hydroxymethyl pyrimidine pyrophosphate (HMP-PP) to form thiamine monophosphate (TMP). This chain is Thiamine-phosphate synthase, found in Methanococcus maripaludis (strain DSM 14266 / JCM 13030 / NBRC 101832 / S2 / LL).